The chain runs to 130 residues: UPF0251 protein Mevan_1492 (130 aa).

Belongs to the UPF0251 family.

The polypeptide is UPF0251 protein Mevan_1492 (Methanococcus vannielii (strain ATCC 35089 / DSM 1224 / JCM 13029 / OCM 148 / SB)).